The sequence spans 274 residues: Large ribosomal subunit protein uL2 (274 aa).

The tract at residues 224–256 is disordered; sequence VMNPVDHPHGGGEGKTGEGRHPVDPWGNLTKGY. The span at 229-246 shows a compositional bias: basic and acidic residues; sequence DHPHGGGEGKTGEGRHPV.

The protein belongs to the universal ribosomal protein uL2 family. As to quaternary structure, part of the 50S ribosomal subunit. Forms a bridge to the 30S subunit in the 70S ribosome.

Its function is as follows. One of the primary rRNA binding proteins. Required for association of the 30S and 50S subunits to form the 70S ribosome, for tRNA binding and peptide bond formation. It has been suggested to have peptidyltransferase activity; this is somewhat controversial. Makes several contacts with the 16S rRNA in the 70S ribosome. In Polaromonas naphthalenivorans (strain CJ2), this protein is Large ribosomal subunit protein uL2.